The sequence spans 81 residues: Large ribosomal subunit protein bL31B (81 aa).

It belongs to the bacterial ribosomal protein bL31 family. Type B subfamily. Part of the 50S ribosomal subunit.

The polypeptide is Large ribosomal subunit protein bL31B (Borreliella burgdorferi (strain ZS7) (Borrelia burgdorferi)).